Consider the following 173-residue polypeptide: Nicotinamide-nucleotide adenylyltransferase (173 aa).

It belongs to the archaeal NMN adenylyltransferase family.

The protein localises to the cytoplasm. It carries out the reaction beta-nicotinamide D-ribonucleotide + ATP + H(+) = diphosphate + NAD(+). Its pathway is cofactor biosynthesis; NAD(+) biosynthesis; NAD(+) from nicotinamide D-ribonucleotide: step 1/1. This is Nicotinamide-nucleotide adenylyltransferase from Methanosarcina barkeri (strain Fusaro / DSM 804).